The following is a 251-amino-acid chain: Flap endonuclease Xni (251 aa).

Asp104 serves as a coordination point for Mg(2+). In terms of domain architecture, 5'-3' exonuclease spans 160-249 (VLPRQLPDYW…IDGNLQQLRL (90 aa)). 5 residues coordinate K(+): Leu171, Ala172, Pro180, Val182, and Ile185. The tract at residues 184-189 (GIGPKS) is interaction with DNA.

The protein belongs to the Xni family. Requires Mg(2+) as cofactor. K(+) is required as a cofactor.

In terms of biological role, has flap endonuclease activity. During DNA replication, flap endonucleases cleave the 5'-overhanging flap structure that is generated by displacement synthesis when DNA polymerase encounters the 5'-end of a downstream Okazaki fragment. In Salmonella newport (strain SL254), this protein is Flap endonuclease Xni.